The primary structure comprises 304 residues: Protoheme IX farnesyltransferase 1 (304 aa).

Transmembrane regions (helical) follow at residues 24–44, 47–67, 99–119, 122–142, 150–170, 176–196, 228–248, and 280–300; these read VVVL…KAPL, FVPW…AGAA, MALG…LAFT, LTAW…TGFL, IVIG…AITG, PLLL…ALCI, LVLF…LVYL, and YSIV…YLPL.

The protein belongs to the UbiA prenyltransferase family. Protoheme IX farnesyltransferase subfamily.

The protein resides in the cell inner membrane. The enzyme catalyses heme b + (2E,6E)-farnesyl diphosphate + H2O = Fe(II)-heme o + diphosphate. It functions in the pathway porphyrin-containing compound metabolism; heme O biosynthesis; heme O from protoheme: step 1/1. Its function is as follows. Converts heme B (protoheme IX) to heme O by substitution of the vinyl group on carbon 2 of heme B porphyrin ring with a hydroxyethyl farnesyl side group. The sequence is that of Protoheme IX farnesyltransferase 1 from Pseudomonas aeruginosa (strain UCBPP-PA14).